Consider the following 597-residue polypeptide: Serine/arginine repetitive matrix protein 3 (597 aa).

The span at 1–31 (MSSTVNNGAASMQSTPDAANGFPQPSSSSGT) shows a compositional bias: polar residues. The tract at residues 1-47 (MSSTVNNGAASMQSTPDAANGFPQPSSSSGTWPRAEEELRAAEPGLV) is disordered. A CWF21 domain is found at 55 to 98 (LDHERKRRVELKCMELQEMMEEQGYSEEEIRQKVGTFRQMLMEK). Basic and acidic residues predominate over residues 99-109 (EGVLTREDRPG). Residues 99 to 597 (EGVLTREDRP…GPAPLPPPAA (499 aa)) form a disordered region. 4 stretches are compositionally biased toward basic residues: residues 149–158 (RGHRGYRTKH), 168–186 (PKKK…KKRR), 199–211 (LRKK…KHRR), and 219–243 (RRKR…KKRP). 2 stretches are compositionally biased toward low complexity: residues 257–278 (SGSS…PSRL) and 291–313 (SQRS…SPQR). Gly residues-rich tracts occupy residues 315 to 328 (GGSG…GGRP) and 374 to 383 (GRGGRAAGGA). The segment covering 384–412 (GRRRRRRRRRRRSRSSASAPRRRGRRRPR) has biased composition (basic residues). Low complexity-rich tracts occupy residues 417-433 (RGSS…SDSG), 466-476 (RPASTSPSPGA), and 488-507 (SSRS…SPSK). The span at 530-549 (LSRDKDGEGRARHSEAEATR) shows a compositional bias: basic and acidic residues. Basic residues predominate over residues 550 to 565 (ARRRSRSYSPIRKRRR).

It belongs to the CWC21 family. In terms of tissue distribution, expressed in breast cancer cell lines.

Its function is as follows. May play a role in regulating breast cancer cell invasiveness. May be involved in RYBP-mediated breast cancer progression. This chain is Serine/arginine repetitive matrix protein 3 (SRRM3), found in Homo sapiens (Human).